The chain runs to 49 residues: Large ribosomal subunit protein bL33B (49 aa).

Belongs to the bacterial ribosomal protein bL33 family.

The protein is Large ribosomal subunit protein bL33B (rpmG2) of Lactococcus lactis subsp. lactis (strain IL1403) (Streptococcus lactis).